A 1383-amino-acid chain; its full sequence is WD repeat-containing protein dyf-2 (1383 aa).

WD repeat units lie at residues 32-71 (EHGSGPIIHRWRPNGHTVAVACANNTVIYYDKKGNVIDAL), 72-112 (NPTG…TDTV), 118-157 (SSKELPTCLAWSPSTPTLVIGNNAGNIVVYNHRTSRRIAV), 160-198 (KHQRSVTQITVTPEDYVISCSDDNTLSVTTLEGTTVSTT), and 337-376 (ETEKNLSEIEVTEDGQLVAVSSQSGVLSIFVTKMPTLAAS). 7 TPR repeats span residues 756–789 (EEKNLLHAQIYTILSRYDDAEQLYLESSRPMEAL), 810–847 (PKEIPYLSKEYAQELELTGDHANSLANYEKGVMENPQN), 885–918 (RVVKRDCAIILEQMKQYTEAAQLYEVGLFYDRAA), 940–973 (PKIHIQYGKIMEKEKKYKVAVKCYETGRDYDNQV), 996–1029 (IEGAKLVAKFFVKLGDYNSAIQFLVMSQCVQEAF), 1031–1053 (LAEKNNAVREYAKAIEQHGNISQ), and 1064–1097 (VNDMFMAAKFYTQAGQYNNAINLLFKNGDDENCV).

In terms of assembly, component of the IFT complex A (IFT-A) composed of at least che-11, daf-10, dyf-2, ift-139, ift-43 and ifta-1. In terms of tissue distribution, expressed in ciliated sensory neurons.

The protein localises to the cell projection. Its subcellular location is the cilium. In terms of biological role, component of the IFT complex A (IFT-A), a complex required for retrograde ciliary transport. Moves along the ciliary axoneme and is involved in the assembly, localization and the movement of other intraflagellar transport (IFT) proteins along the cilia axoneme. May also associate with the BBSome complex in order to mediate ciliary transport. Regulates cilia biogenesis, morphology and sensitivity to environmental cues. The protein is WD repeat-containing protein dyf-2 of Caenorhabditis elegans.